A 468-amino-acid polypeptide reads, in one-letter code: UDP-N-acetylmuramate--L-alanine ligase (468 aa).

121-127 lines the ATP pocket; that stretch reads GSHGKTT.

The protein belongs to the MurCDEF family.

Its subcellular location is the cytoplasm. It carries out the reaction UDP-N-acetyl-alpha-D-muramate + L-alanine + ATP = UDP-N-acetyl-alpha-D-muramoyl-L-alanine + ADP + phosphate + H(+). It functions in the pathway cell wall biogenesis; peptidoglycan biosynthesis. Its function is as follows. Cell wall formation. This Borrelia garinii subsp. bavariensis (strain ATCC BAA-2496 / DSM 23469 / PBi) (Borreliella bavariensis) protein is UDP-N-acetylmuramate--L-alanine ligase.